The following is a 269-amino-acid chain: Glutamate racemase (269 aa).

Substrate is bound by residues 14 to 15 (DS) and 46 to 47 (YS). Residue C78 is the Proton donor/acceptor of the active site. 79–80 (NT) is a binding site for substrate. C189 functions as the Proton donor/acceptor in the catalytic mechanism. 190-191 (TH) lines the substrate pocket.

Belongs to the aspartate/glutamate racemases family.

The enzyme catalyses L-glutamate = D-glutamate. It functions in the pathway cell wall biogenesis; peptidoglycan biosynthesis. Its function is as follows. Provides the (R)-glutamate required for cell wall biosynthesis. The chain is Glutamate racemase from Haemophilus influenzae (strain PittGG).